The following is an 863-amino-acid chain: Potassium/sodium hyperpolarization-activated cyclic nucleotide-gated channel 2 (863 aa).

Positions 1 to 10 (MDARGGGGRP) are enriched in gly residues. Residues 1–131 (MDARGGGGRP…AGPAGEPRGS (131 aa)) are disordered. At 1 to 188 (MDARGGGGRP…PYSDFRFYWD (188 aa)) the chain is on the cytoplasmic side. Residues 17–47 (TPAPGPPPPPPPPAPPQPQPPPAPPPNPTTP) are compositionally biased toward pro residues. Low complexity predominate over residues 106–128 (GAASGPSAAEEAGSEEAGPAGEP). Ser119 and Ser134 each carry phosphoserine. An involved in subunit assembly region spans residues 131–182 (SQASFLQRQFGALLQPGVNKFSLRMFGSQKAVEREQERVKSAGAWIIHPYSD). Residues 189 to 209 (FTMLLFMVGNLIIIPVGITFF) traverse the membrane as a helical segment. Residues 210–213 (KDET) lie on the Extracellular side of the membrane. Residues 214 to 234 (TAPWIVFNVVSDTFFLMDLVL) form a helical membrane-spanning segment. The Cytoplasmic segment spans residues 235–261 (NFRTGIVIEDNTEIILDPEKIKKKYLR). Residues 262 to 282 (TWFVVDFVSSIPVDYIFLIVE) traverse the membrane as a helical segment. Residues 283 to 290 (KGIDSEVY) are Extracellular-facing. The helical; Voltage-sensor transmembrane segment at 291–311 (KTARALRIVRFTKILSLLRLL) threads the bilayer. At 312–342 (RLSRLIRYIHQWEEIFHMTYDLASAVMRICN) the chain is on the cytoplasmic side. A helical membrane pass occupies residues 343 to 363 (LISMMLLLCHWDGCLQFLVPM). Over 364–386 (LQDFPSDCWVSINNMVNHSWSEL) the chain is Extracellular. Asn380 is a glycosylation site (N-linked (GlcNAc...) asparagine). Residues 387 to 408 (YSFALFKAMSHMLCIGYGRQAP) constitute an intramembrane region (pore-forming). The Extracellular segment spans residues 409–413 (ESMTD). Residues 414–434 (IWLTMLSMIVGATCYAMFIGH) form a helical membrane-spanning segment. At 435-863 (ATALIQSLDS…SARSRLSSNL (429 aa)) the chain is on the cytoplasmic side. Residues Gly581, Glu582, Cys584, Arg591, Thr592, and Arg632 each contribute to the 3',5'-cyclic AMP site. Ser641 carries the post-translational modification Phosphoserine; by PKG/PRKG2. Ser726 carries the phosphoserine modification. Position 728 is an omega-N-methylarginine (Arg728). The tract at residues 730–863 (VRRAPPGPLP…SARSRLSSNL (134 aa)) is disordered. Positions 734–755 (PPGPLPPAASPGPPAASPPAAP) are enriched in pro residues. Phosphoserine is present on residues Ser743, Ser750, and Ser757. Low complexity-rich tracts occupy residues 756–765 (SSPRAPRTSP), 778–800 (PALP…PSLP), and 808–834 (PAAS…AAPS). Residues Ser840, Ser842, and Ser847 each carry the phosphoserine modification.

Belongs to the potassium channel HCN family. Homotetramer. The channel is composed of a homo- or heterotetrameric complex of pore-forming subunits. Heterotetramer with HCN1. Forms an obligate 4:4 complex with accessory subunit PEX5L; regulates HCN2 cell-surface expression and cyclic nucleotide dependence. Interacts with KCNE2. In terms of processing, S-palmitoylated. Post-translationally, N-glycosylated; required for cell surface trafficking of HCN2. Phosphorylation at Ser-641 by PRKG2 shifts the voltage-dependence to more negative voltages, hence counteracting the stimulatory effect of cGMP on gating. As to expression, highly expressed in brain. Detected at low levels in heart, in ventricle, atrium and in sinoatrial node (SAN).

It localises to the cell membrane. The catalysed reaction is Na(+)(in) = Na(+)(out). It catalyses the reaction K(+)(in) = K(+)(out). The enzyme catalyses NH4(+)(in) = NH4(+)(out). Its activity is regulated as follows. Activated by cAMP, and at 10-100 times higher concentrations, also by cGMP. cAMP binding causes a conformation change that leads to the assembly of an active tetramer and channel opening. In the absence of cAMP, the C-terminal region is thought to exert a tonic inhibition on the pore when HCN2 is in a non-tetrameric form. Channel activity is modulated by intracellular chloride ions and pH; acidic pH shifts the activation to more negative voltages. Phosphatidylinositol-4,5- bisphosphate (PIP(2)) acts as a ligand that allosterically opens HCN2 by shifting voltage-dependent channel activation toward depolarized potentials. Inhibited by extracellular cesium ions. Functionally, hyperpolarization-activated ion channel exhibiting weak selectivity for potassium over sodium ions. Contributes to the native pacemaker currents in heart (If) and in neurons (Ih). Can also transport ammonium in the distal nephron. Involved in the initiation of neuropathic pain in sensory neurons. The polypeptide is Potassium/sodium hyperpolarization-activated cyclic nucleotide-gated channel 2 (Mus musculus (Mouse)).